Reading from the N-terminus, the 347-residue chain is E3 ubiquitin-protein ligase RNF146-B (347 aa).

An RING-type zinc finger spans residues 37–75 (CAICLQTCVHPVSLPCKHVFCYLCVKGASWLGKRCALCR). Residues lysine 85, lysine 95, lysine 131, and lysine 176 each participate in a glycyl lysine isopeptide (Lys-Gly) (interchain with G-Cter in ubiquitin) cross-link. Positions 92 to 168 (EELKAASRGN…EHGRRRKIKR (77 aa)) constitute a WWE domain. Disordered stretches follow at residues 196 to 241 (SSAD…GTSL) and 257 to 347 (ERSH…VTEV). A compositionally biased stretch (low complexity) spans 203 to 217 (SVPAQSGASVQSSSV). The span at 282 to 296 (SIEETESDASSDSED) shows a compositional bias: acidic residues. Serine 288 and serine 292 each carry phosphoserine. Over residues 304–322 (HSLTQQRLLVPNPSQTVSD) the composition is skewed to polar residues.

As to quaternary structure, interacts with poly-ADP-ribosylated AXIN1, AXIN2, BLZF1 and CASC3. In terms of processing, ubiquitinated; autoubiquitinated. Autoubiquitination is enhanced upon poly(ADP-ribose)-binding.

The protein resides in the cytoplasm. Its subcellular location is the cytosol. The enzyme catalyses S-ubiquitinyl-[E2 ubiquitin-conjugating enzyme]-L-cysteine + [acceptor protein]-L-lysine = [E2 ubiquitin-conjugating enzyme]-L-cysteine + N(6)-ubiquitinyl-[acceptor protein]-L-lysine.. The protein operates within protein modification; protein ubiquitination. Its function is as follows. E3 ubiquitin-protein ligase that specifically binds poly-ADP-ribosylated proteins and mediates their ubiquitination and subsequent degradation. Acts as an activator of the Wnt signaling pathway by mediating the ubiquitination of poly-ADP-ribosylated AXIN1 and AXIN2, 2 key components of the beta-catenin destruction complex. Acts in cooperation with tankyrase proteins (TNKS and TNKS2), which mediate poly-ADP-ribosylation of target proteins AXIN1, AXIN2, BLZF1, CASC3, TNKS and TNKS2. Recognizes and binds tankyrase-dependent poly-ADP-ribosylated proteins via its WWE domain and mediates their ubiquitination. The chain is E3 ubiquitin-protein ligase RNF146-B (RNF146B) from Bos taurus (Bovine).